We begin with the raw amino-acid sequence, 322 residues long: Cytochrome c biogenesis protein CcsA (322 aa).

6 consecutive transmembrane segments (helical) span residues 9 to 29, 44 to 64, 143 to 163, 226 to 246, 259 to 276, and 289 to 309; these read ILTH…LITL, GMIV…ASSG, MLLS…ILII, VISL…VWAN, ETWA…LHSR, and IASI…LLGI.

This sequence belongs to the CcmF/CycK/Ccl1/NrfE/CcsA family. May interact with Ccs1.

It localises to the plastid. The protein resides in the chloroplast thylakoid membrane. In terms of biological role, required during biogenesis of c-type cytochromes (cytochrome c6 and cytochrome f) at the step of heme attachment. This Triticum aestivum (Wheat) protein is Cytochrome c biogenesis protein CcsA.